Consider the following 473-residue polypeptide: Photosystem II CP43 reaction center protein (473 aa).

Positions 1-14 (MKTLYSLRRFYPVE) are excised as a propeptide. Residue threonine 15 is modified to N-acetylthreonine. Phosphothreonine is present on threonine 15. Transmembrane regions (helical) follow at residues 69-93 (LFEV…PHLA), 134-155 (LLGP…KDRN), 178-200 (KALY…RKIT), 255-275 (KPFA…LSYS), and 291-312 (WFNN…ASQA). Glutamate 367 contributes to the [CaMn4O5] cluster binding site. Residues 447-471 (RARAAAAGFEKGIDRDFEPVLFMTP) traverse the membrane as a helical segment.

It belongs to the PsbB/PsbC family. PsbC subfamily. In terms of assembly, PSII is composed of 1 copy each of membrane proteins PsbA, PsbB, PsbC, PsbD, PsbE, PsbF, PsbH, PsbI, PsbJ, PsbK, PsbL, PsbM, PsbT, PsbX, PsbY, PsbZ, Psb30/Ycf12, at least 3 peripheral proteins of the oxygen-evolving complex and a large number of cofactors. It forms dimeric complexes. Requires Binds multiple chlorophylls and provides some of the ligands for the Ca-4Mn-5O cluster of the oxygen-evolving complex. It may also provide a ligand for a Cl- that is required for oxygen evolution. PSII binds additional chlorophylls, carotenoids and specific lipids. as cofactor.

The protein resides in the plastid. Its subcellular location is the chloroplast thylakoid membrane. In terms of biological role, one of the components of the core complex of photosystem II (PSII). It binds chlorophyll and helps catalyze the primary light-induced photochemical processes of PSII. PSII is a light-driven water:plastoquinone oxidoreductase, using light energy to abstract electrons from H(2)O, generating O(2) and a proton gradient subsequently used for ATP formation. The sequence is that of Photosystem II CP43 reaction center protein from Cucumis sativus (Cucumber).